We begin with the raw amino-acid sequence, 1426 residues long: Epidermal growth factor receptor (1426 aa).

Positions 1 to 30 are cleaved as a signal peptide; the sequence is MLLRRRNGPCPFPLLLLLLAHCICIWPASA. At 31–868 the chain is on the extracellular side; the sequence is ARDRYARQNN…SKITANLDVN (838 aa). N-linked (GlcNAc...) asparagine glycosylation is found at N128, N241, N419, N443, N482, N569, N599, N617, N816, N823, and N828. Residues 869 to 889 form a helical membrane-spanning segment; the sequence is MIFIITGAVLVPTICILCVVT. The Cytoplasmic segment spans residues 890-1426; it reads YICRQKQKAK…HRNRNTETRV (537 aa). T902 carries the phosphothreonine; by PKC modification. The Protein kinase domain maps to 938–1198; the sequence is LRKGGVLGMG…QLTTVFAEFA (261 aa). ATP contacts are provided by residues 944-952 and K971; that span reads LGMGAFGRV. Residue D1063 is the Proton acceptor of the active site. The segment at 1232 to 1297 is disordered; sequence PTTDGSEAIA…DSSAREVGVG (66 aa). Basic and acidic residues predominate over residues 1257–1276; that stretch reads HRTDCTDEMPKLNRYCKDPS. Y1310 is subject to Phosphotyrosine; by autocatalysis.

This sequence belongs to the protein kinase superfamily. Tyr protein kinase family. EGF receptor subfamily. In terms of assembly, homodimer. Binding of the ligand spitz triggers homodimerization of the receptor however, it is able to form dimers, albeit weakly, in the absence of spitz. Interacts (when phosphorylated on tyrosine residues) with Vav (via SH2 domain). Interacts (when ubiquitinated) with Graf. May interact (when phosphorylated) with EGFRAP (via SH2 domain). Post-translationally, ubiquitination by Cbl in response to high spi, promotes its interaction with Graf and thus facilitates its GPI-enriched endocytic compartment (GEEC) mediated endocytosis and its subsequent degradation. In terms of tissue distribution, ubiquitously expressed in embryos. In larvae, uniform expression is seen in wing disks, genital disk, anlagen of testis and ovary, and brain cortex. In eye-antenna disk, highest expression is anterior to morphogenetic furrow, levels remain high in photoreceptor precursor cells. This pattern is reversed in posterior eye disk. In adults expression is high in brain cortex and thoracic and abdominal ganglia.

Its subcellular location is the membrane. It carries out the reaction L-tyrosyl-[protein] + ATP = O-phospho-L-tyrosyl-[protein] + ADP + H(+). Its function is as follows. Receptor tyrosine kinase, binding ligands of the EGF family and activating several signaling cascades to convert extracellular cues into appropriate cellular responses. Known ligands include spitz, gurken, vein and giant-lens. Transduces the signal through the ras-raf-MAPK pathway. Critical for the proliferation of imaginal tissues, and for the determination of both the antero-posterior and dorso-ventral polarities of the oocyte. In the embryo, plays a role in the establishment of ventral cell fates, maintenance of amnioserosa and ventral neuroectodermal cells, germ band retraction, cell fate specification in the central nervous system, and production and repair of the cuticle. During dorsal closure (DC) functions with the dpp- and ACK-signaling pathways to regulate expression of the myosin zip in the embryonic epidermis and amnioserosa (AS), and thus coordinate the progression of epidermal cell shape changes required for correct DC. In the embryonic epidermis, functions by negatively regulating dpp and consequently the dpp-dependent expression of the myosin zip. In the AS, negatively regulates the production/ and or secretion of a diffusible signal which, is produced by the ACK-signaling pathway, and acts in the AS and epidermal cells to promote zip expression. Also required in the AS to inhibit or delay apoptosis, and consequently slow the rate of DC. Therefore functions at multiple levels to negatively regulate morphogenesis during DC, suggesting that it acts as a general brake mechanism for adjusting the rate of dorsal closure to ensure that closure proceeds smoothly and without loss of epidermal integrity. During oogenesis, one of two tyrosine kinase chemoattractant receptors (Egfr and Pvr), that function in the border cells (BC) to detect guidance cues from the oocyte and transduce this information to the guidance pathway that regulate the collective migration of the BC cluster through the nurse cells to the oocyte. This chain is Epidermal growth factor receptor (Egfr), found in Drosophila melanogaster (Fruit fly).